The chain runs to 476 residues: ATP synthase subunit beta (476 aa).

153–160 (GGAGVGKT) is an ATP binding site.

Belongs to the ATPase alpha/beta chains family. F-type ATPases have 2 components, CF(1) - the catalytic core - and CF(0) - the membrane proton channel. CF(1) has five subunits: alpha(3), beta(3), gamma(1), delta(1), epsilon(1). CF(0) has three main subunits: a(1), b(2) and c(9-12). The alpha and beta chains form an alternating ring which encloses part of the gamma chain. CF(1) is attached to CF(0) by a central stalk formed by the gamma and epsilon chains, while a peripheral stalk is formed by the delta and b chains.

It is found in the cell membrane. It carries out the reaction ATP + H2O + 4 H(+)(in) = ADP + phosphate + 5 H(+)(out). Functionally, produces ATP from ADP in the presence of a proton gradient across the membrane. The catalytic sites are hosted primarily by the beta subunits. This Latilactobacillus sakei subsp. sakei (strain 23K) (Lactobacillus sakei subsp. sakei) protein is ATP synthase subunit beta.